Reading from the N-terminus, the 166-residue chain is Orofacial cleft 1 candidate gene 1 protein homolog (166 aa).

Residues 1–22 (MDKEKFQQKAVKQTKQKKSTSA) form a disordered region.

The polypeptide is Orofacial cleft 1 candidate gene 1 protein homolog (Ofcc1) (Mus musculus (Mouse)).